Consider the following 335-residue polypeptide: Large ribosomal subunit protein uL10 (335 aa).

Residues 300-335 (QVSEQAAEKKEEKKEEEKKGPSEEEIGGGLSSLFGG) are disordered. The segment covering 305–321 (AAEKKEEKKEEEKKGPS) has biased composition (basic and acidic residues). Over residues 326-335 (GGGLSSLFGG) the composition is skewed to gly residues.

This sequence belongs to the universal ribosomal protein uL10 family. In terms of assembly, part of the 50S ribosomal subunit. Forms part of the ribosomal stalk which helps the ribosome interact with GTP-bound translation factors. Forms a heptameric L10(L12)2(L12)2(L12)2 complex, where L10 forms an elongated spine to which the L12 dimers bind in a sequential fashion.

Its function is as follows. Forms part of the ribosomal stalk, playing a central role in the interaction of the ribosome with GTP-bound translation factors. The protein is Large ribosomal subunit protein uL10 of Sulfolobus acidocaldarius (strain ATCC 33909 / DSM 639 / JCM 8929 / NBRC 15157 / NCIMB 11770).